Here is a 211-residue protein sequence, read N- to C-terminus: Cytidylate kinase (211 aa).

Glycine 9–threonine 17 provides a ligand contact to ATP.

It belongs to the cytidylate kinase family. Type 1 subfamily.

The protein localises to the cytoplasm. The enzyme catalyses CMP + ATP = CDP + ADP. The catalysed reaction is dCMP + ATP = dCDP + ADP. This Paramagnetospirillum magneticum (strain ATCC 700264 / AMB-1) (Magnetospirillum magneticum) protein is Cytidylate kinase.